The primary structure comprises 130 residues: Small ribosomal subunit protein uS8 (130 aa).

It belongs to the universal ribosomal protein uS8 family. Part of the 30S ribosomal subunit. Contacts proteins S5 and S12.

In terms of biological role, one of the primary rRNA binding proteins, it binds directly to 16S rRNA central domain where it helps coordinate assembly of the platform of the 30S subunit. The sequence is that of Small ribosomal subunit protein uS8 from Aster yellows witches'-broom phytoplasma (strain AYWB).